The sequence spans 513 residues: ATP synthase subunit alpha (513 aa).

Residue 169–176 (GDRQTGKT) participates in ATP binding.

It belongs to the ATPase alpha/beta chains family. As to quaternary structure, F-type ATPases have 2 components, CF(1) - the catalytic core - and CF(0) - the membrane proton channel. CF(1) has five subunits: alpha(3), beta(3), gamma(1), delta(1), epsilon(1). CF(0) has three main subunits: a(1), b(2) and c(9-12). The alpha and beta chains form an alternating ring which encloses part of the gamma chain. CF(1) is attached to CF(0) by a central stalk formed by the gamma and epsilon chains, while a peripheral stalk is formed by the delta and b chains.

It is found in the cell inner membrane. It catalyses the reaction ATP + H2O + 4 H(+)(in) = ADP + phosphate + 5 H(+)(out). Functionally, produces ATP from ADP in the presence of a proton gradient across the membrane. The alpha chain is a regulatory subunit. This is ATP synthase subunit alpha from Cronobacter sakazakii (strain ATCC BAA-894) (Enterobacter sakazakii).